The primary structure comprises 463 residues: Probable multidrug resistance protein YoeA (463 aa).

12 consecutive transmembrane segments (helical) span residues 24–44, 56–76, 106–126, 143–163, 177–197, 202–222, 256–276, 293–313, 330–350, 370–390, 397–417, and 427–447; these read LFLV…LVGM, VAAV…TIGI, FTFL…LDIL, ARIL…TTFL, IVST…MFGF, IYGS…VLMV, VPAS…ISFV, VASY…IFAA, VGIW…YVFS, LLMI…ISAT, VLWP…PVAF, and ILGV…LIYG.

The protein belongs to the multi antimicrobial extrusion (MATE) (TC 2.A.66.1) family.

The protein localises to the cell membrane. In Bacillus subtilis (strain 168), this protein is Probable multidrug resistance protein YoeA (yoeA).